Consider the following 517-residue polypeptide: Benzoate 4-monooxygenase bphA (517 aa).

The chain crosses the membrane as a helical span at residues 4–24; sequence LLLSPYGAYLGLALLVLYYLL. 2 N-linked (GlcNAc...) asparagine glycosylation sites follow: Asn-282 and Asn-325. Position 461 (Cys-461) interacts with heme.

This sequence belongs to the cytochrome P450 family. It depends on heme as a cofactor.

The protein localises to the membrane. It catalyses the reaction benzoate + reduced [NADPH--hemoprotein reductase] + O2 = 4-hydroxybenzoate + oxidized [NADPH--hemoprotein reductase] + H2O + H(+). Its function is as follows. Cytochrome P450 monooxygenase; part of the benzoic acid degradation pathway also known as the protocatechuic acid pathway. Benzoic acid debradation begins with the conversion of benzoic acid into 4-hydroxybenzoic acid through hydroxylation by the benzoate-4-monooxygenase bphA, and its partner NADPH-cytochrome P450 reductase cprA which act as a mediator in electron donation from NADPH. 4-Hydroxybenzoic acid is then converted into 3,4-dihydroxybenzoic acid (also called protocatechuic acid) by the p-hydroxybenzoate-m-hydroxylase phhA. Protocatechuic acid is converted into 3-carboxy-cis,cis-muconic acid by the intradiol ring-cleavage dioxygenase prcA, which is further metabolized through the 3-oxoadipate pathway to finally enter the tricarboxylic acid cycle (TCA). The sequence is that of Benzoate 4-monooxygenase bphA from Aspergillus niger (strain ATCC MYA-4892 / CBS 513.88 / FGSC A1513).